A 295-amino-acid chain; its full sequence is HTH-type transcriptional regulator TrpI (295 aa).

The 58-residue stretch at 6 to 63 (PSLNALRAFEAAARLHSISLAAEELHVTHGAVSRQVRLLEDDLGVALFGKDGRGVKLT) folds into the HTH lysR-type domain. The segment at residues 23-42 (ISLAAEELHVTHGAVSRQVR) is a DNA-binding region (H-T-H motif).

The protein belongs to the LysR transcriptional regulatory family. In terms of assembly, homotetramer.

Activates the expression of the trpBA genes, which encode the two tryptophan synthase subunits, and represses initiation at its own promoter. Acts by binding to two adjacent sites in the intergenic region. In the absence of the inducer indoleglycerol phosphate (InGP), TrpI binds to site I. In the presence of InGP, TrpI binds to site I and site II. Binding to site II is site I dependent. InGP strongly stimulates binding to site II and is required for maximal activation of trpBA. This is HTH-type transcriptional regulator TrpI from Pseudomonas aeruginosa (strain ATCC 15692 / DSM 22644 / CIP 104116 / JCM 14847 / LMG 12228 / 1C / PRS 101 / PAO1).